Reading from the N-terminus, the 245-residue chain is Sugar fermentation stimulation protein homolog (245 aa).

The protein belongs to the SfsA family.

The sequence is that of Sugar fermentation stimulation protein homolog from Yersinia pestis bv. Antiqua (strain Nepal516).